A 213-amino-acid polypeptide reads, in one-letter code: Translation initiation factor IF-3 (213 aa).

Residues 193–213 (EKIASLPPLPPDNSGEPEDDE) are disordered.

The protein belongs to the IF-3 family. In terms of assembly, monomer.

It is found in the cytoplasm. IF-3 binds to the 30S ribosomal subunit and shifts the equilibrium between 70S ribosomes and their 50S and 30S subunits in favor of the free subunits, thus enhancing the availability of 30S subunits on which protein synthesis initiation begins. The polypeptide is Translation initiation factor IF-3 (Chlorobaculum tepidum (strain ATCC 49652 / DSM 12025 / NBRC 103806 / TLS) (Chlorobium tepidum)).